Here is a 142-residue protein sequence, read N- to C-terminus: MKTFTAKPETVKRDWYVVDAEGKTLGRLATELARRLRGKHKAEYTPHVDTGDYLIVLNADKVAVTGNKRNDKIYYHYTGHVGGIKQATFEEMIARRPERVIEIAVKGMLPKGPLGRAMFRKLKVYAGTEHNHAAQQPQVLDI.

This sequence belongs to the universal ribosomal protein uL13 family. As to quaternary structure, part of the 50S ribosomal subunit.

In terms of biological role, this protein is one of the early assembly proteins of the 50S ribosomal subunit, although it is not seen to bind rRNA by itself. It is important during the early stages of 50S assembly. This Sodalis glossinidius (strain morsitans) protein is Large ribosomal subunit protein uL13.